We begin with the raw amino-acid sequence, 149 residues long: Oligosaccharyltransferase complex subunit OSTC (149 aa).

The Cytoplasmic segment spans residues 1 to 32 (METLYRVPFLVLECPNLKLKKPPWVHMPSAMT). Residues 33-53 (VYALVVVSYFLITGGIIYDVI) traverse the membrane as a helical segment. Residues 54–83 (VEPPSVGSMTDEHGHQRPVAFLAYRVNGQY) are Extracellular-facing. A helical membrane pass occupies residues 84–104 (IMEGLASSFLFTMGGLGFIIL). Topologically, residues 105-117 (DRSNAPNIPKLNR) are cytoplasmic. A helical membrane pass occupies residues 118–138 (FLLLFIGFVCVLLSFFMARVF). At 139–149 (MRMKLPGYLMG) the chain is on the extracellular side.

Belongs to the OSTC family. As to quaternary structure, component of STT3A-containing oligosaccharyl transferase (OST-A) complex. STT3A-containing complex assembly occurs through the formation of 3 subcomplexes. Subcomplex 1 contains RPN1 and TMEM258, subcomplex 2 contains the STT3A-specific subunits STT3A, DC2/OSTC, and KCP2 as well as the core subunit OST4, and subcomplex 3 contains RPN2, DAD1, and OST48. The OST-A complex can form stable complexes with the Sec61 complex or with both the Sec61 and TRAP complexes. Interacts with PSEN1 and NCSTN; indicative for an association with the gamma-secretase complex.

The protein resides in the endoplasmic reticulum. Its subcellular location is the membrane. It participates in protein modification; protein glycosylation. Its function is as follows. Subunit of STT3A-containing oligosaccharyl transferase (OST-A) complex that catalyzes the initial transfer of a defined glycan (Glc(3)Man(9)GlcNAc(2) in eukaryotes) from the lipid carrier dolichol-pyrophosphate to an asparagine residue within an Asn-X-Ser/Thr consensus motif in nascent polypeptide chains, the first step in protein N-glycosylation. N-glycosylation occurs cotranslationally and the complex associates with the Sec61 complex at the channel-forming translocon complex that mediates protein translocation across the endoplasmic reticulum (ER). Within the OST-A complex, acts as an adapter that anchors the OST-A complex to the Sec61 complex. May be involved in N-glycosylation of APP (amyloid-beta precursor protein). Can modulate gamma-secretase cleavage of APP by enhancing endoprotelysis of PSEN1. The sequence is that of Oligosaccharyltransferase complex subunit OSTC from Canis lupus familiaris (Dog).